Here is a 691-residue protein sequence, read N- to C-terminus: NADPH--cytochrome P450 reductase (691 aa).

Residues 2 to 7 (PFGIDN) are Lumenal-facing. The helical transmembrane segment at 8–24 (TDFTVLAGLVLAVLLYV) threads the bilayer. Residues 25–691 (KRNSIKELLM…TSGRYQEDVW (667 aa)) are Cytoplasmic-facing. The 144-residue stretch at 61-204 (YLVLYASQTG…DYMAWKDSIL (144 aa)) folds into the Flavodoxin-like domain. FMN-binding positions include 67-72 (SQTGTA), K78, 116-119 (STYG), 152-161 (LGNSTYEFFN), and D187. Residues 266–529 (SQPYIAPIVK…HVRRSNFRLP (264 aa)) form the FAD-binding FR-type domain. R285 contacts NADP(+). Residues 439 to 442 (RYYS), 457 to 459 (TSI), and 476 to 479 (GVTT) each bind FAD. Residues T543, 610–611 (SR), 617–621 (KVYVQ), and D646 each bind NADP(+). Residue K666 forms a Glycyl lysine isopeptide (Lys-Gly) (interchain with G-Cter in ubiquitin) linkage. W691 serves as a coordination point for FAD.

Belongs to the NADPH--cytochrome P450 reductase family. The protein in the N-terminal section; belongs to the flavodoxin family. It in the C-terminal section; belongs to the flavoprotein pyridine nucleotide cytochrome reductase family. Interacts with PCL1. The cofactor is FAD. FMN is required as a cofactor. Post-translationally, phosphorylated by the cyclin-CDK PCL1-PHO85.

The protein resides in the endoplasmic reticulum membrane. The protein localises to the mitochondrion outer membrane. It localises to the cell membrane. The enzyme catalyses 2 oxidized [cytochrome P450] + NADPH = 2 reduced [cytochrome P450] + NADP(+) + H(+). Functionally, this enzyme is required for electron transfer from NADP to cytochrome P450 in microsomes. It can also provide electron transfer to heme oxygenase and cytochrome B5. Involved in ergosterol biosynthesis. Has NADPH-dependent ferrireductase activity on the plasma membrane. This is NADPH--cytochrome P450 reductase from Saccharomyces cerevisiae (strain ATCC 204508 / S288c) (Baker's yeast).